Consider the following 351-residue polypeptide: uncharacterized protein (351 aa).

Positions 1–32 are cleaved as a signal peptide; the sequence is MKNKKRVFIASSLSCVLLLLSAANTEANSANK. Positions 26–74 are disordered; sequence EANSANKDSQDQTKKEHVDKAQQKEKRNVNDKDKNTPGPDDIGKNGKVT. Residues 33 to 60 are compositionally biased toward basic and acidic residues; that stretch reads DSQDQTKKEHVDKAQQKEKRNVNDKDKN.

This sequence belongs to the aerolysin family.

This is an uncharacterized protein from Staphylococcus aureus (strain MRSA252).